The chain runs to 266 residues: MIAMNTPDFQRMKKDNKKISMVTCYDYWSACIISQSNVDCILVGDSLAMVMYGHSTTLPATVEIMAQHIQAVSRGAPNKFIIGDMPFCSYRKDLTTSMNAVERLMQAGAQAIKLEGADAHNLKFIHHVVKSGIPVIGHLGLTPQSIYTLGGFKVQGKEPSAAKKLMADAKALAETGCFAVVLECVPSELAELITHSISIPTIGIGAGPATSGQVLVLQDLLGTNNQFQPKYLKKFLNGFELIKKALDDFDQEVKTSTYPHLETHCY.

Mg(2+) is bound by residues Asp-45 and Asp-84. 3-methyl-2-oxobutanoate is bound by residues 45–46 (DS), Asp-84, and Lys-113. Position 115 (Glu-115) interacts with Mg(2+). Glu-183 functions as the Proton acceptor in the catalytic mechanism.

The protein belongs to the PanB family. As to quaternary structure, homodecamer; pentamer of dimers. Requires Mg(2+) as cofactor.

Its subcellular location is the cytoplasm. It catalyses the reaction 3-methyl-2-oxobutanoate + (6R)-5,10-methylene-5,6,7,8-tetrahydrofolate + H2O = 2-dehydropantoate + (6S)-5,6,7,8-tetrahydrofolate. Its pathway is cofactor biosynthesis; (R)-pantothenate biosynthesis; (R)-pantoate from 3-methyl-2-oxobutanoate: step 1/2. Functionally, catalyzes the reversible reaction in which hydroxymethyl group from 5,10-methylenetetrahydrofolate is transferred onto alpha-ketoisovalerate to form ketopantoate. This Coxiella burnetii (strain Dugway 5J108-111) protein is 3-methyl-2-oxobutanoate hydroxymethyltransferase.